Consider the following 198-residue polypeptide: Probable thymidylate kinase (198 aa).

9–16 provides a ligand contact to ATP; sequence GIDGSGKT.

The protein belongs to the thymidylate kinase family.

The enzyme catalyses dTMP + ATP = dTDP + ADP. The chain is Probable thymidylate kinase from Methanococcus vannielii (strain ATCC 35089 / DSM 1224 / JCM 13029 / OCM 148 / SB).